The chain runs to 113 residues: UPF0122 protein PEPE_0845 (113 aa).

It belongs to the UPF0122 family.

Its function is as follows. Might take part in the signal recognition particle (SRP) pathway. This is inferred from the conservation of its genetic proximity to ftsY/ffh. May be a regulatory protein. The chain is UPF0122 protein PEPE_0845 from Pediococcus pentosaceus (strain ATCC 25745 / CCUG 21536 / LMG 10740 / 183-1w).